Here is a 242-residue protein sequence, read N- to C-terminus: Platelet-derived growth factor subunit B (242 aa).

The N-terminal stretch at 1 to 20 (MNRCWALFLSLCCYLRLVSA) is a signal peptide. Positions 21-81 (EGDPIPEELY…ELESLSRGRR (61 aa)) are cleaved as a propeptide — removed in mature form. N-linked (GlcNAc...) asparagine glycosylation is present at Asn63. 3 cysteine pairs are disulfide-bonded: Cys97–Cys141, Cys130–Cys178, and Cys134–Cys180. The span at 219–232 (PPKGKHRKFKHTHD) shows a compositional bias: basic residues. Residues 219-242 (PPKGKHRKFKHTHDKKALKETLGA) form a disordered region. Positions 233–242 (KKALKETLGA) are enriched in basic and acidic residues.

This sequence belongs to the PDGF/VEGF growth factor family. In terms of assembly, antiparallel homodimer; disulfide-linked. Antiparallel heterodimer with PDGFA; disulfide-linked. The PDGFB homodimer interacts with PDGFRA and PDGFRB homodimers, and with heterodimers formed by PDGFRA and PDGFRB. The heterodimer composed of PDGFA and PDGFB interacts with PDGFRB homodimers, and with heterodimers formed by PDGFRA and PDGFRB. Interacts with XLKD1. Interacts with LRP1. Interacts with SORL1 (via the N-terminal ectodomain). Interacts with CD82; this interaction inhibits PDGFB-mediated signaling pathway.

Its subcellular location is the secreted. Its function is as follows. Growth factor that plays an essential role in the regulation of embryonic development, cell proliferation, cell migration, survival and chemotaxis. Potent mitogen for cells of mesenchymal origin. Required for normal proliferation and recruitment of pericytes and vascular smooth muscle cells in the central nervous system, skin, lung, heart and placenta. Required for normal blood vessel development, and for normal development of kidney glomeruli. Plays an important role in wound healing. Signaling is modulated by the formation of heterodimers with PDGFA. The sequence is that of Platelet-derived growth factor subunit B (PDGFB) from Canis lupus familiaris (Dog).